A 212-amino-acid chain; its full sequence is uncharacterized protein (212 aa).

This is an uncharacterized protein from Dryophytes versicolor (chameleon treefrog).